A 251-amino-acid polypeptide reads, in one-letter code: Zinc import ATP-binding protein ZnuC (251 aa).

Residues 5–220 (VSLENVSVSF…PEFISMFGPR (216 aa)) form the ABC transporter domain. ATP is bound at residue 37 to 44 (GPNGAGKS).

Belongs to the ABC transporter superfamily. Zinc importer (TC 3.A.1.15.5) family. In terms of assembly, the complex is composed of two ATP-binding proteins (ZnuC), two transmembrane proteins (ZnuB) and a solute-binding protein (ZnuA).

It localises to the cell inner membrane. The catalysed reaction is Zn(2+)(out) + ATP(in) + H2O(in) = Zn(2+)(in) + ADP(in) + phosphate(in) + H(+)(in). Its function is as follows. Part of the ABC transporter complex ZnuABC involved in zinc import. Responsible for energy coupling to the transport system. This is Zinc import ATP-binding protein ZnuC from Salmonella typhi.